We begin with the raw amino-acid sequence, 344 residues long: Pyruvate dehydrogenase E1 component subunit alpha (344 aa).

Residues histidine 55, tyrosine 81, arginine 82, alanine 130, isoleucine 132, aspartate 168, glycine 169, and asparagine 197 each contribute to the pyruvate site. Positions 81, 82, 130, 132, 168, 169, 197, and 266 each coordinate thiamine diphosphate. Residue aspartate 168 participates in Mg(2+) binding. Asparagine 197 contacts Mg(2+).

As to quaternary structure, heterodimer of an alpha and a beta chain. It depends on thiamine diphosphate as a cofactor. Mg(2+) is required as a cofactor.

Its subcellular location is the plastid. The protein localises to the chloroplast. It carries out the reaction N(6)-[(R)-lipoyl]-L-lysyl-[protein] + pyruvate + H(+) = N(6)-[(R)-S(8)-acetyldihydrolipoyl]-L-lysyl-[protein] + CO2. In terms of biological role, the pyruvate dehydrogenase complex catalyzes the overall conversion of pyruvate to acetyl-CoA and CO(2). It contains multiple copies of three enzymatic components: pyruvate dehydrogenase (E1), dihydrolipoamide acetyltransferase (E2) and lipoamide dehydrogenase (E3). This Porphyra purpurea (Red seaweed) protein is Pyruvate dehydrogenase E1 component subunit alpha (pdhA).